Consider the following 383-residue polypeptide: Lipid-A-disaccharide synthase (383 aa).

The protein belongs to the LpxB family.

It catalyses the reaction a lipid X + a UDP-2-N,3-O-bis[(3R)-3-hydroxyacyl]-alpha-D-glucosamine = a lipid A disaccharide + UDP + H(+). The protein operates within bacterial outer membrane biogenesis; LPS lipid A biosynthesis. Its function is as follows. Condensation of UDP-2,3-diacylglucosamine and 2,3-diacylglucosamine-1-phosphate to form lipid A disaccharide, a precursor of lipid A, a phosphorylated glycolipid that anchors the lipopolysaccharide to the outer membrane of the cell. The polypeptide is Lipid-A-disaccharide synthase (Myxococcus xanthus (strain DK1622)).